The sequence spans 90 residues: Cell division topological specificity factor (90 aa).

The protein belongs to the MinE family.

Functionally, prevents the cell division inhibition by proteins MinC and MinD at internal division sites while permitting inhibition at polar sites. This ensures cell division at the proper site by restricting the formation of a division septum at the midpoint of the long axis of the cell. The protein is Cell division topological specificity factor of Francisella philomiragia subsp. philomiragia (strain ATCC 25017 / CCUG 19701 / FSC 153 / O#319-036).